A 447-amino-acid chain; its full sequence is GA-binding protein subunit beta-2 (447 aa).

5 ANK repeats span residues 5–34, 37–66, 70–99, 103–132, and 136–166; these read DLGKRLLEAARKGQDDEVRTLMANGAPFTT, LGTSPLHLAAQYGHYSTAEVLLRAGVSRDA, VDRTPLHMAAADGHAHIVELLVRNGADVNA, LKMTALHWATEHHHRDVVELLIKYGADVHA, and FDKSAFDIALEKNNAEILVILQEAMQNQVNA. Ser253 carries the phosphoserine modification. Positions 345-395 form a coiled coil; sequence EESKEGTERELLQQRLQEANRRAQEYRHQLLKKEQEAEQYRLRLEAMARQQ. A disordered region spans residues 418–447; that stretch reads REMEERETEVTGAVGTAEPHTGVSMETVST.

In terms of assembly, heterotetramer of two alpha and two beta subunits. The C-terminal is necessary for the formation of a heterotetrameric GABP-alpha-2/beta-2 complex, and also facilitates homotypic dimerization. Interacts with ADGRB2.

It localises to the nucleus. May function as transcription factor capable of interacting with purine rich repeats (GA repeats). The sequence is that of GA-binding protein subunit beta-2 (GABPB2) from Bos taurus (Bovine).